We begin with the raw amino-acid sequence, 248 residues long: Methionine aminopeptidase (248 aa).

H77 contacts substrate. The a divalent metal cation site is built by D94, D105, and H169. Residue H176 participates in substrate binding. A divalent metal cation is bound by residues E202 and E233.

Belongs to the peptidase M24A family. Methionine aminopeptidase type 1 subfamily. Monomer. The cofactor is Co(2+). Zn(2+) serves as cofactor. Requires Mn(2+) as cofactor. It depends on Fe(2+) as a cofactor.

It catalyses the reaction Release of N-terminal amino acids, preferentially methionine, from peptides and arylamides.. Its function is as follows. Removes the N-terminal methionine from nascent proteins. The N-terminal methionine is often cleaved when the second residue in the primary sequence is small and uncharged (Met-Ala-, Cys, Gly, Pro, Ser, Thr, or Val). Requires deformylation of the N(alpha)-formylated initiator methionine before it can be hydrolyzed. In Mycoplasma genitalium (strain ATCC 33530 / DSM 19775 / NCTC 10195 / G37) (Mycoplasmoides genitalium), this protein is Methionine aminopeptidase.